Reading from the N-terminus, the 663-residue chain is Probable receptor-like protein kinase At1g49730 (663 aa).

Residues 1–25 (MVVNSQAFLLALIALLATQLPSLMA) form the signal peptide. Topologically, residues 26–254 (ADCPLDFSGS…TNPYHLTMVP (229 aa)) are extracellular. 5 N-linked (GlcNAc...) asparagine glycosylation sites follow: Asn-36, Asn-46, Asn-70, Asn-101, and Asn-171. The segment at 213-243 (SFSPVASPEPSPSTVGGISPSNSDSQMTTSR) is disordered. Residues 224-243 (PSTVGGISPSNSDSQMTTSR) are compositionally biased toward polar residues. Residues 255–275 (TIGIVVTAVALTMLVVLVILI) form a helical membrane-spanning segment. Over 276–663 (RRKNRELDES…PHSPINGFSF (388 aa)) the chain is Cytoplasmic. The 283-residue stretch at 327–609 (NDFNTVIGQG…ESCDPVHSAF (283 aa)) folds into the Protein kinase domain. ATP contacts are provided by residues 333–341 (IGQGGFGTV) and Lys-355. Asp-451 functions as the Proton acceptor in the catalytic mechanism. Residues 631–663 (RGDSRIFGPSSSTTSRSHYSRSLPHSPINGFSF) form a disordered region. Low complexity predominate over residues 640–652 (SSSTTSRSHYSRS).

This sequence belongs to the protein kinase superfamily. Ser/Thr protein kinase family.

It localises to the cell membrane. The catalysed reaction is L-seryl-[protein] + ATP = O-phospho-L-seryl-[protein] + ADP + H(+). It catalyses the reaction L-threonyl-[protein] + ATP = O-phospho-L-threonyl-[protein] + ADP + H(+). The chain is Probable receptor-like protein kinase At1g49730 from Arabidopsis thaliana (Mouse-ear cress).